Consider the following 415-residue polypeptide: [Pyruvate dehydrogenase (acetyl-transferring)] kinase isozyme 3, mitochondrial (415 aa).

The Histidine kinase domain occupies 131-362 (IEYKEKFGFD…DAVIYLKALS (232 aa)). 247-254 (ELFKNSMR) contributes to the ATP binding site. Lys278 carries the post-translational modification N6-succinyllysine. ATP contacts are provided by residues Asp287, 306 to 307 (ST), and 323 to 328 (GFGYGL). The segment at 383–415 (TPEADDWSNPSSEPRDASKYKAKQDKIKSNRTF) is disordered. Basic and acidic residues predominate over residues 395 to 415 (EPRDASKYKAKQDKIKSNRTF).

This sequence belongs to the PDK/BCKDK protein kinase family. As to quaternary structure, homodimer. Interacts with the pyruvate dehydrogenase complex subunit DLAT, and is part of the multimeric pyruvate dehydrogenase complex that contains multiple copies of pyruvate dehydrogenase (E1), dihydrolipoamide acetyltransferase (DLAT, E2) and lipoamide dehydrogenase (DLD, E3).

The protein localises to the mitochondrion matrix. It carries out the reaction L-seryl-[pyruvate dehydrogenase E1 alpha subunit] + ATP = O-phospho-L-seryl-[pyruvate dehydrogenase E1 alpha subunit] + ADP + H(+). Inhibits pyruvate dehydrogenase activity by phosphorylation of the E1 subunit PDHA1, and thereby regulates glucose metabolism and aerobic respiration. Can also phosphorylate PDHA2. Decreases glucose utilization and increases fat metabolism in response to prolonged fasting, and as adaptation to a high-fat diet. Plays a role in glucose homeostasis and in maintaining normal blood glucose levels in function of nutrient levels and under starvation. Plays a role in the generation of reactive oxygen species. This is [Pyruvate dehydrogenase (acetyl-transferring)] kinase isozyme 3, mitochondrial (Pdk3) from Mus musculus (Mouse).